The primary structure comprises 83 residues: Apolipoprotein C-I, basic form (83 aa).

An N-terminal signal peptide occupies residues 1–26 (MRLFLSLPVLVVVLSMVLEGPAPAQG).

This sequence belongs to the apolipoprotein C1 family.

Its subcellular location is the secreted. Inhibitor of lipoprotein binding to the low density lipoprotein (LDL) receptor, LDL receptor-related protein, and very low density lipoprotein (VLDL) receptor. Associates with high density lipoproteins (HDL) and the triacylglycerol-rich lipoproteins in the plasma and makes up about 10% of the protein of the VLDL and 2% of that of HDL. Appears to interfere directly with fatty acid uptake and is also the major plasma inhibitor of cholesteryl ester transfer protein (CETP). Binds free fatty acids and reduces their intracellular esterification. Modulates the interaction of APOE with beta-migrating VLDL and inhibits binding of beta-VLDL to the LDL receptor-related protein. This Colobus guereza (Mantled guereza) protein is Apolipoprotein C-I, basic form (APOC1B).